The chain runs to 427 residues: 3-phosphoshikimate 1-carboxyvinyltransferase (427 aa).

Residues lysine 20, serine 21, and arginine 25 each coordinate 3-phosphoshikimate. A phosphoenolpyruvate-binding site is contributed by lysine 20. Positions 92 and 120 each coordinate phosphoenolpyruvate. 3-phosphoshikimate is bound by residues serine 166, glutamine 168, aspartate 312, and lysine 339. Residue glutamine 168 participates in phosphoenolpyruvate binding. Aspartate 312 serves as the catalytic Proton acceptor. Residues arginine 343 and arginine 385 each contribute to the phosphoenolpyruvate site.

The protein belongs to the EPSP synthase family. Monomer.

Its subcellular location is the cytoplasm. The enzyme catalyses 3-phosphoshikimate + phosphoenolpyruvate = 5-O-(1-carboxyvinyl)-3-phosphoshikimate + phosphate. Its pathway is metabolic intermediate biosynthesis; chorismate biosynthesis; chorismate from D-erythrose 4-phosphate and phosphoenolpyruvate: step 6/7. Its function is as follows. Catalyzes the transfer of the enolpyruvyl moiety of phosphoenolpyruvate (PEP) to the 5-hydroxyl of shikimate-3-phosphate (S3P) to produce enolpyruvyl shikimate-3-phosphate and inorganic phosphate. In Streptococcus pyogenes serotype M4 (strain MGAS10750), this protein is 3-phosphoshikimate 1-carboxyvinyltransferase.